Reading from the N-terminus, the 578-residue chain is Acyl-CoA synthetase ACTT5 (578 aa).

Residue 211–222 (RLTTSGTTGLPK) coordinates AMP. The segment at 472–551 (ELEAALLQAK…DEIPRSPTGK (80 aa)) is AMP-binding.

Belongs to the ATP-dependent AMP-binding enzyme family.

The protein operates within mycotoxin biosynthesis. In terms of biological role, acyl-CoA synthetase; part of the gene clusters that mediate the biosynthesis of the host-selective toxins (HSTs) ACT-toxins responsible for brown spot of tangerine disease by the tangerine pathotype which affects tangerines and mandarins. ACT-toxins consist of three moieties, 9,10-epoxy-8-hydroxy-9-methyl-decatrienoic acid (EDA), valine and a polyketide. ACT-toxin I is toxic to both citrus and pear; toxin II the 5''-deoxy derivative of ACT-toxin I, is highly toxic to pear and slightly toxic to citrus. On cellular level, ACT-toxins affect plasma membrane of susceptible cells and cause a sudden increase in loss of K(+) after a few minutes of toxin treatment. The acyl-CoA ligase ACTT1, the hydrolase ACTT2, the enoyl-CoA hydratases ACTT3 and ACTT6, and the acyl-CoA synthetase ACTT5 are all involved in the biosynthesis of the AK-, AF- and ACT-toxin common 9,10-epoxy-8-hydroxy-9-methyl-decatrienoic acid (EDA) structural moiety. The exact role of each enzyme, and of additional enzymes identified within the AF-toxin clusters have still to be determined. On the other hand, ACTTS1 to ACTTS4 are specific to the tangerine pathotype. The function of ACTTS3 is to elongate the polyketide chain portion of ACT-toxin that is unique to this toxin. The enoyl-reductase ACTTS2 might complement the missing enoyl-reductase (ER) domain in ACTTS3 in the synthesis of the polyketide portion of ACT-toxin. The roles of the nonribosomal peptide synthetases-related proteins ACTTS1 and ACTTS4 have also still not been elucidated. The protein is Acyl-CoA synthetase ACTT5 of Alternaria alternata (Alternaria rot fungus).